The sequence spans 399 residues: RNA polymerase sigma factor SigA1 (399 aa).

The tract at residues 1–73 (MTQLISIDKE…DEDSVGEDED (73 aa)) is disordered. The span at 60 to 73 (DAIDDEDSVGEDED) shows a compositional bias: acidic residues. The interval 167–237 (MVQSNLRLVV…TRAIADQSRT (71 aa)) is sigma-70 factor domain-2. The short motif at 191-194 (DLIQ) is the Interaction with polymerase core subunit RpoC element. The sigma-70 factor domain-3 stretch occupies residues 246 to 321 (ETISRIKKTT…EADGETPEDE (76 aa)). The tract at residues 334–387 (VLSTLSPRERDVLRLRYGLDDGRMKTLEEIGQLFNVTRERIRQIEAKALRKLRH) is sigma-70 factor domain-4. Positions 360–379 (LEEIGQLFNVTRERIRQIEA) form a DNA-binding region, H-T-H motif.

The protein belongs to the sigma-70 factor family. RpoD/SigA subfamily. In terms of assembly, interacts transiently with the RNA polymerase catalytic core.

It is found in the cytoplasm. Its function is as follows. Sigma factors are initiation factors that promote the attachment of RNA polymerase to specific initiation sites and are then released. This sigma factor is the primary sigma factor during exponential growth. In Synechococcus elongatus (strain ATCC 33912 / PCC 7942 / FACHB-805) (Anacystis nidulans R2), this protein is RNA polymerase sigma factor SigA1.